The chain runs to 845 residues: Dynein axonemal assembly factor 5 (845 aa).

8 HEAT repeats span residues 47–84, 138–175, 180–217, 260–297, 332–369, 523–561, 674–715, and 766–803; these read DVFDKLYLHLLKCYEDRFESVRSKAIQVVSAFLSSLPP, ECYPLVVKILIKSIKDDYPVVQREGCSAVVTLSRLADT, PFTESILLPLYTMLNHKHAQARISAIQAIARLSLHMDA, SFFERILPLVLCCLKDESPEVLNHIYPQWLKCGIQYFN, QRSLRLLQLITRETSDWKDNVRLHALKLLYQFVLHAEA, NFGQTLIEKMVKLLNTSVPKIHERWFHLALQDVINLDAA, SESV…MSVE, and AIVKRAMDLLLLYHESPEKDMRAAVAVTLKVLAKSHPE.

This sequence belongs to the DNAAF5 family. Expressed in testis.

Its subcellular location is the cytoplasm. It is found in the dynein axonemal particle. Functionally, cytoplasmic protein involved in the delivery of the dynein machinery to the motile cilium. It is required for the assembly of the axonemal dynein inner and outer arms, two structures attached to the peripheral outer doublet A microtubule of the axoneme, that play a crucial role in cilium motility. The sequence is that of Dynein axonemal assembly factor 5 from Drosophila melanogaster (Fruit fly).